The primary structure comprises 335 residues: Erlin-2 (335 aa).

At 1–2 the chain is on the cytoplasmic side; that stretch reads MS. Residues 3–23 traverse the membrane as a helical segment; the sequence is HAGAIAAIGVALIAAALFSAI. The Lumenal portion of the chain corresponds to 24–335; that stretch reads HKIEEGHVGV…ALNEPAVGDE (312 aa). A glycan (N-linked (GlcNAc...) asparagine) is linked at asparagine 106. Polar residues predominate over residues 310–321; the sequence is AGPSVQSATLLQ. The segment at 310–335 is disordered; it reads AGPSVQSATLLQDDSPALNEPAVGDE.

Belongs to the band 7/mec-2 family.

It is found in the endoplasmic reticulum membrane. Functionally, mediates the endoplasmic reticulum-associated degradation (ERAD) of inositol 1,4,5-trisphosphate receptors (IP3Rs). Promotes sterol-accelerated ERAD of HMGCR. Involved in regulation of cellular cholesterol homeostasis by regulation the SREBP signaling pathway. The protein is Erlin-2 (erlin2) of Xenopus tropicalis (Western clawed frog).